The sequence spans 143 residues: HTH-type transcriptional regulator MntR (143 aa).

In terms of domain architecture, HTH dtxR-type spans 1-63; sequence MPTPSMEDYL…YERYRGLVLT (63 aa). Mn(2+) is bound by residues D8, E11, H77, E99, E102, and H103.

This sequence belongs to the DtxR/MntR family. Homodimer.

The protein localises to the cytoplasm. With respect to regulation, DNA binding is strongly activated by Mn(2+). In terms of biological role, central regulator of manganese homeostasis. The polypeptide is HTH-type transcriptional regulator MntR (Shouchella clausii (strain KSM-K16) (Alkalihalobacillus clausii)).